The chain runs to 156 residues: Large ribosomal subunit protein uL15 (156 aa).

A compositionally biased stretch (basic and acidic residues) spans 1-13; sequence MKLNEIKDNEGAT. The segment at 1-41 is disordered; the sequence is MKLNEIKDNEGATKNRKRLGRGIGSGSGKTAGRGVKGQKAR. A compositionally biased stretch (gly residues) spans 21–35; sequence RGIGSGSGKTAGRGV.

It belongs to the universal ribosomal protein uL15 family. In terms of assembly, part of the 50S ribosomal subunit.

Binds to the 23S rRNA. The sequence is that of Large ribosomal subunit protein uL15 from Sinorhizobium medicae (strain WSM419) (Ensifer medicae).